The following is a 296-amino-acid chain: Probable lipid kinase YegS-like (296 aa).

In terms of domain architecture, DAGKc spans 1–130 (MPHTLLILNG…IDLAQVNDKH (130 aa)). ATP is bound by residues T37, 63 to 69 (GDGTINE), and T92. Mg(2+) is bound by residues L212, D215, and L217. Catalysis depends on E268, which acts as the Proton acceptor.

Belongs to the diacylglycerol/lipid kinase family. YegS lipid kinase subfamily. The cofactor is Mg(2+). Ca(2+) serves as cofactor.

It is found in the cytoplasm. In terms of biological role, probably phosphorylates lipids; the in vivo substrate is unknown. This is Probable lipid kinase YegS-like from Yersinia enterocolitica serotype O:8 / biotype 1B (strain NCTC 13174 / 8081).